Reading from the N-terminus, the 153-residue chain is ORM1-like protein 1 (153 aa).

Topologically, residues methionine 1–alanine 27 are cytoplasmic. A run of 2 helical transmembrane segments spans residues leucine 28–proline 46 and valine 47–methionine 64. Topologically, residues histidine 65–serine 105 are cytoplasmic. 2 helical membrane-spanning segments follow: residues proline 106–histidine 123 and phenylalanine 124–proline 140. The Cytoplasmic portion of the chain corresponds to glutamine 141–tyrosine 153.

The protein belongs to the ORM family. Ceramide-sensitive subunit of the serine palmitoyltransferase (SPT) complex, which is also composed of SPTLC1, SPTLC2/3 and SPTSSA/B.

It localises to the endoplasmic reticulum membrane. Its function is as follows. Plays an essential role in the homeostatic regulation of sphingolipid de novo biosynthesis by modulating the activity of the serine palmitoyltransferase (SPT) in response to ceramide levels. When complexed to SPT, the binding of ceramides to its N-terminus stabilizes a conformation that block SPT substrate entry, hence preventing SPT catalytic activity. Through this mechanism, maintains ceramide levels at sufficient concentrations for the production of complex sphingolipids, but which prevents the accumulation of ceramides to levels that trigger apoptosis. The chain is ORM1-like protein 1 (ormdl1) from Danio rerio (Zebrafish).